Here is a 300-residue protein sequence, read N- to C-terminus: Recombination-associated protein RdgC (300 aa).

It belongs to the RdgC family.

It is found in the cytoplasm. It localises to the nucleoid. Functionally, may be involved in recombination. In Herminiimonas arsenicoxydans, this protein is Recombination-associated protein RdgC.